We begin with the raw amino-acid sequence, 577 residues long: Calcium-dependent protein kinase 22 (577 aa).

The N-myristoyl glycine moiety is linked to residue glycine 2. Positions tyrosine 105–leucine 368 constitute a Protein kinase domain. Residues leucine 111–threonine 119 and lysine 134 each bind ATP. Aspartate 234 (proton acceptor) is an active-site residue. The autoinhibitory domain stretch occupies residues alanine 374–valine 404. EF-hand domains lie at glutamate 411 to proline 446, valine 447 to methionine 482, serine 483 to proline 518, and glutamate 520 to tryptophan 553. Ca(2+) contacts are provided by aspartate 424, aspartate 426, serine 428, asparagine 430, aspartate 435, aspartate 460, aspartate 462, asparagine 464, threonine 466, glutamate 471, aspartate 496, aspartate 498, asparagine 500, glutamate 507, aspartate 531, aspartate 533, aspartate 535, arginine 537, and glutamate 542.

It belongs to the protein kinase superfamily. Ser/Thr protein kinase family. CDPK subfamily.

It is found in the membrane. It catalyses the reaction L-seryl-[protein] + ATP = O-phospho-L-seryl-[protein] + ADP + H(+). The catalysed reaction is L-threonyl-[protein] + ATP = O-phospho-L-threonyl-[protein] + ADP + H(+). Its activity is regulated as follows. Activated by calcium. Autophosphorylation may play an important role in the regulation of the kinase activity. Functionally, may play a role in signal transduction pathways that involve calcium as a second messenger. This Oryza sativa subsp. japonica (Rice) protein is Calcium-dependent protein kinase 22.